The following is a 364-amino-acid chain: FMNH(2)-dependent dimethylsulfone monooxygenase (364 aa).

Belongs to the SsuD family.

The enzyme catalyses dimethyl sulfone + FMNH2 + O2 = methanesulfinate + FMN + formaldehyde + H2O + 2 H(+). Involved in the dimethyl sulfide degradation pathway. Catalyzes the oxidation of dimethylsulfone (DMSO2) to yield methanesulfinate, which is oxidized spontaneously to methanesulfonate in the presence of dioxygen and FMNH(2). This is FMNH(2)-dependent dimethylsulfone monooxygenase from Pseudomonas fluorescens (strain Pf0-1).